Here is a 270-residue protein sequence, read N- to C-terminus: Acyl-[acyl-carrier-protein]--UDP-N-acetylglucosamine O-acyltransferase (270 aa).

Residues 69-72 (QDLK), His121, His140, and Gln157 contribute to the substrate site.

Belongs to the transferase hexapeptide repeat family. LpxA subfamily. Homotrimer.

It localises to the cytoplasm. It carries out the reaction a (3R)-hydroxyacyl-[ACP] + UDP-N-acetyl-alpha-D-glucosamine = a UDP-3-O-[(3R)-3-hydroxyacyl]-N-acetyl-alpha-D-glucosamine + holo-[ACP]. It participates in glycolipid biosynthesis; lipid IV(A) biosynthesis; lipid IV(A) from (3R)-3-hydroxytetradecanoyl-[acyl-carrier-protein] and UDP-N-acetyl-alpha-D-glucosamine: step 1/6. Its function is as follows. Involved in the biosynthesis of lipid A, a phosphorylated glycolipid that anchors the lipopolysaccharide to the outer membrane of the cell. This chain is Acyl-[acyl-carrier-protein]--UDP-N-acetylglucosamine O-acyltransferase, found in Helicobacter pylori (strain ATCC 700392 / 26695) (Campylobacter pylori).